Reading from the N-terminus, the 276-residue chain is Protein G1 (276 aa).

Disordered regions lie at residues 1–30 (MSSS…SQKR) and 178–213 (SYHK…ATAP). Residues 21 to 30 (RPSRYESQKR) show a composition bias toward basic and acidic residues. The ALOG domain occupies 24–183 (RYESQKRRDW…ARGISYHKKK (160 aa)). Residues 178–187 (SYHKKKKRRG) are compositionally biased toward basic residues. A Nuclear localization signal motif is present at residues 181 to 185 (KKKKR). Residues 189-202 (NMNGARGGGGGGAR) show a composition bias toward gly residues. Over residues 203 to 213 (AGVNDGDATAP) the composition is skewed to low complexity.

It belongs to the plant homeotic and developmental regulators ALOG protein family. Expressed at the empty glumes of immature spikelets, which are lemmas of the sterile florets located at the lateral side of the spikelet, throughout their development.

It localises to the nucleus. In terms of biological role, probable transcription regulator that acts as a developmental regulator by promoting cell growth in response to light. Transcription regulator that restrains empty glumes growth, lemmas of the sterile florets located at the lateral side of the rice spikelet, to maintain their small size, probably by repressing lemma identity via transcription regulation. The sequence is that of Protein G1 (G1) from Oryza sativa subsp. japonica (Rice).